A 397-amino-acid polypeptide reads, in one-letter code: ATP-dependent RNA helicase eIF4A (397 aa).

Positions 23–51 (YKFDDLNLKPNIVRGIFGYGYETPSAIQQ) match the Q motif motif. The Helicase ATP-binding domain occupies 54–224 (ILPITEGRDV…TKFMNNPVRI (171 aa)). Position 67–74 (67–74 (AQSGTGKT)) interacts with ATP. The DEAD box motif lies at 172–175 (DEAD). The region spanning 235–396 (GIKQFYINVE…EMPADIGALF (162 aa)) is the Helicase C-terminal domain.

Belongs to the DEAD box helicase family. eIF4A subfamily. In terms of assembly, component of the eIF4F complex, which composition varies with external and internal environmental conditions. It is composed of at least eIF4A, eIF4E and eIF4G.

It localises to the cytoplasm. The enzyme catalyses ATP + H2O = ADP + phosphate + H(+). Functionally, ATP-dependent RNA helicase which is a subunit of the eIF4F complex involved in cap recognition and is required for mRNA binding to ribosome. In the current model of translation initiation, eIF4A unwinds RNA secondary structures in the 5'-UTR of mRNAs which is necessary to allow efficient binding of the small ribosomal subunit, and subsequent scanning for the initiator codon. In Candida albicans (strain SC5314 / ATCC MYA-2876) (Yeast), this protein is ATP-dependent RNA helicase eIF4A (TIF1).